The following is a 144-amino-acid chain: Snake venom vascular endothelial growth factor toxin cratrin (144 aa).

The N-terminal stretch at 1–24 is a signal peptide; sequence MAVYLLAVAILFCIQGWPSGTVQG. Position 25 is a pyrrolidone carboxylic acid (Q25). 3 cysteine pairs are disulfide-bonded: C38-C80, C69-C115, and C73-C117. Positions 119–144 are disordered; it reads PRSTVNNGKRKKNPKEGEPRAKFPLV. Positions 132 to 144 are enriched in basic and acidic residues; that stretch reads PKEGEPRAKFPLV.

Belongs to the PDGF/VEGF growth factor family. Snake venom VEGF subfamily. As to quaternary structure, homodimer; disulfide-linked. Interacts with VEGF receptor-1 (FLT1) with a high affinity, whereas it binds to VEGF receptor-2 (KDR) with a low affinity. Does not bind VEGF receptor-3 (FLT4). As to expression, expressed by the venom gland.

It is found in the secreted. Functionally, snake venom VEGFs that may contribute to venom dispersion and prey subjugation by inducing vascular permeability and hypotension. This protein induces an increase in capillary permeability after intradermal injection, as well as a drastic hypotensive effect after intravenous injection. The hypotension is mediated by nitric oxide (NO), which is produced by VEGF-activated endothelium NO synthase. Also induces angiogenesis in vitro. Like other crotalid VEGFs, this protein interacts with VEGF receptor-1 (FLT1) with a high affinity, whereas it binds to VEGF receptor-2 (KDR) with a low affinity. The chain is Snake venom vascular endothelial growth factor toxin cratrin from Crotalus atrox (Western diamondback rattlesnake).